A 655-amino-acid chain; its full sequence is Very long-chain specific acyl-CoA dehydrogenase, mitochondrial (655 aa).

Residues 1–40 (MRAARMAQSTGRQLLRLRGVSSWPGELLGQPRPGPARRPY) constitute a mitochondrion transit peptide. The segment at 22 to 66 (SWPGELLGQPRPGPARRPYASGVAQAAVDQSDSQPSEASTREKRA) is disordered. Positions 41–482 (ASGVAQAAVD…ALQGCMDKGK (442 aa)) are catalytic. Positions 49-59 (VDQSDSQPSEA) are enriched in polar residues. N6-acetyllysine; alternate is present on K71. K71 bears the N6-succinyllysine; alternate mark. Residue K195 is modified to N6-succinyllysine. An FAD-binding site is contributed by 214–223 (FCLTEPSSGS). C237 carries the S-nitrosocysteine modification. K239 carries the N6-acetyllysine; alternate modification. K239 is modified (N6-succinyllysine; alternate). 249–251 (WIS) provides a ligand contact to FAD. N6-acetyllysine; alternate occurs at positions 276 and 278. N6-succinyllysine; alternate is present on residues K276 and K278. K298 is subject to N6-acetyllysine. K331 carries the N6-acetyllysine; alternate modification. At K331 the chain carries N6-succinyllysine; alternate. At K372 the chain carries N6-succinyllysine. Substrate is bound at residue 461–463 (FEG). E462 functions as the Proton acceptor in the catalytic mechanism. 464–466 (TND) lines the FAD pocket. K482 is modified (N6-acetyllysine; alternate). At K482 the chain carries N6-succinyllysine; alternate. The membrane-anchoring stretch occupies residues 483–516 (ELSGLGNALKNPFGNAGLLLGEAGKQLRRRAGLG). A phosphoserine mark is found at S517 and S522. K550 carries the post-translational modification N6-acetyllysine. K556 is modified (N6-acetyllysine; alternate). Residue K556 is modified to N6-succinyllysine; alternate. Q562 contributes to the FAD binding site. K639 is modified (N6-succinyllysine).

Belongs to the acyl-CoA dehydrogenase family. As to quaternary structure, homodimer. Homodimerizes after import into the mitochondrion. FAD serves as cofactor. Post-translationally, S-nitrosylation at Cys-237 in liver improves catalytic efficiency.

The protein resides in the mitochondrion inner membrane. The catalysed reaction is a very-long-chain 2,3-saturated fatty acyl-CoA + oxidized [electron-transfer flavoprotein] + H(+) = a very-long-chain (2E)-enoyl-CoA + reduced [electron-transfer flavoprotein]. It catalyses the reaction dodecanoyl-CoA + oxidized [electron-transfer flavoprotein] + H(+) = (2E)-dodecenoyl-CoA + reduced [electron-transfer flavoprotein]. It carries out the reaction tetradecanoyl-CoA + oxidized [electron-transfer flavoprotein] + H(+) = (2E)-tetradecenoyl-CoA + reduced [electron-transfer flavoprotein]. The enzyme catalyses oxidized [electron-transfer flavoprotein] + hexadecanoyl-CoA + H(+) = (2E)-hexadecenoyl-CoA + reduced [electron-transfer flavoprotein]. The catalysed reaction is octadecanoyl-CoA + oxidized [electron-transfer flavoprotein] + H(+) = (2E)-octadecenoyl-CoA + reduced [electron-transfer flavoprotein]. It catalyses the reaction eicosanoyl-CoA + oxidized [electron-transfer flavoprotein] + H(+) = (2E)-eicosenoyl-CoA + reduced [electron-transfer flavoprotein]. It carries out the reaction docosanoyl-CoA + oxidized [electron-transfer flavoprotein] + H(+) = (2E)-docosenoyl-CoA + reduced [electron-transfer flavoprotein]. The enzyme catalyses tetracosanoyl-CoA + oxidized [electron-transfer flavoprotein] + H(+) = (2E)-tetracosenoyl-CoA + reduced [electron-transfer flavoprotein]. Its pathway is lipid metabolism; mitochondrial fatty acid beta-oxidation. Its function is as follows. Very long-chain specific acyl-CoA dehydrogenase is one of the acyl-CoA dehydrogenases that catalyze the first step of mitochondrial fatty acid beta-oxidation, an aerobic process breaking down fatty acids into acetyl-CoA and allowing the production of energy from fats. The first step of fatty acid beta-oxidation consists in the removal of one hydrogen from C-2 and C-3 of the straight-chain fatty acyl-CoA thioester, resulting in the formation of trans-2-enoyl-CoA. Among the different mitochondrial acyl-CoA dehydrogenases, very long-chain specific acyl-CoA dehydrogenase acts specifically on acyl-CoAs with saturated 12 to 24 carbons long primary chains. The protein is Very long-chain specific acyl-CoA dehydrogenase, mitochondrial of Bos taurus (Bovine).